The following is a 108-amino-acid chain: Ferredoxin, plant-type (108 aa).

The 2Fe-2S ferredoxin-type domain occupies 5–96; sequence FEITVQPGGE…DLCIERYSKP (92 aa). [2Fe-2S] cluster contacts are provided by Cys-40, Cys-45, Cys-48, and Cys-80.

It belongs to the 2Fe2S plant-type ferredoxin family.

It participates in aromatic compound metabolism; catechol degradation. Ferredoxins are iron-sulfur proteins that transfer electrons in a wide variety of metabolic reactions. This is Ferredoxin, plant-type (nahT) from Pseudomonas putida (Arthrobacter siderocapsulatus).